A 199-amino-acid chain; its full sequence is N-(5'-phosphoribosyl)anthranilate isomerase (199 aa).

The protein belongs to the TrpF family.

It catalyses the reaction N-(5-phospho-beta-D-ribosyl)anthranilate = 1-(2-carboxyphenylamino)-1-deoxy-D-ribulose 5-phosphate. It participates in amino-acid biosynthesis; L-tryptophan biosynthesis; L-tryptophan from chorismate: step 3/5. The polypeptide is N-(5'-phosphoribosyl)anthranilate isomerase (Lacticaseibacillus casei (strain BL23) (Lactobacillus casei)).